A 251-amino-acid chain; its full sequence is Esterase mlcF (251 aa).

Residues Ser126, Asp193, and His221 each act as charge relay system in the active site.

This sequence belongs to the LovG family.

It catalyses the reaction dihydro-ML-236C-[compactin nonaketide synthase] + H2O = holo-[compactin nonaketide synthase] + dihydro-ML-236C carboxylate + H(+). Its pathway is polyketide biosynthesis. In terms of biological role, esterase; part of the gene cluster that mediates the biosynthesis of compactin, also known as mevastatin or ML-236B, and which acts as a potent competitive inhibitor of HMG-CoA reductase. Compactin biosynthesis is performed in two stages. The first stage is catalyzed by the nonaketide synthase mlcA, which belongs to type I polyketide synthases and catalyzes the iterative nine-step formation of the polyketide. This PKS stage is completed by the action of dehydrogenase mlcG, which catalyzes the NADPH-dependent reduction of the unsaturated tetra-, penta- and heptaketide intermediates that arise during the mlcA-mediated biosynthesis of the nonaketide chain and leads to dihydro-ML-236C carboxylate. Covalently bound dihydro-ML-236C carboxylate is released from mlcA by the mlcF esterase. Conversion of dihydro-ML-236C carboxylate into ML-236A carboxylate is subsequently performed with the participation of molecular oxygen and P450 monoogygenase mlcC. Finally, mlcH performs the conversion of ML-236A carboxylate to ML-236B/compactin carboxylate through the addition of the side-chain diketide moiety produced by the diketide synthase mlcB. The chain is Esterase mlcF from Penicillium citrinum.